A 428-amino-acid chain; its full sequence is Enolase 3 (428 aa).

Q163 is a (2R)-2-phosphoglycerate binding site. E205 functions as the Proton donor in the catalytic mechanism. D242, E286, and D313 together coordinate Mg(2+). Positions 338, 367, 368, and 389 each coordinate (2R)-2-phosphoglycerate. The active-site Proton acceptor is K338.

It belongs to the enolase family. The cofactor is Mg(2+).

The protein localises to the cytoplasm. It is found in the secreted. It localises to the cell surface. It carries out the reaction (2R)-2-phosphoglycerate = phosphoenolpyruvate + H2O. The protein operates within carbohydrate degradation; glycolysis; pyruvate from D-glyceraldehyde 3-phosphate: step 4/5. Catalyzes the reversible conversion of 2-phosphoglycerate (2-PG) into phosphoenolpyruvate (PEP). It is essential for the degradation of carbohydrates via glycolysis. In Lactobacillus johnsonii (strain CNCM I-12250 / La1 / NCC 533), this protein is Enolase 3.